We begin with the raw amino-acid sequence, 254 residues long: Major prion protein (254 aa).

An N-terminal signal peptide occupies residues 1-22; that stretch reads MANLSYWLLALFVATWTDVGLC. An interaction with GRB2, ERI3 and SYN1 region spans residues 23 to 231; sequence KKRPKPGGWN…SQAYYDGRRS (209 aa). The segment at 25-104 is disordered; the sequence is RPKPGGWNTG…THNQWNKPSK (80 aa). Tandem repeats lie at residues 51–59, 60–67, 68–75, 76–83, and 84–91. Residues 51-91 are 5 X 8 AA tandem repeats of P-H-G-G-G-W-G-Q; that stretch reads PQGGGTWGQPHGGGWGQPHGGGWGQPHGGGWGQPHGGGWGQ. Gly residues predominate over residues 52–95; the sequence is QGGGTWGQPHGGGWGQPHGGGWGQPHGGGWGQPHGGGWGQGGGT. Residues H61, G62, G63, H69, G70, G71, H77, G78, G79, H85, G86, and G87 each coordinate Cu(2+). The segment at 90 to 231 is prP27-30 (protease resistant core); the sequence is GQGGGTHNQW…SQAYYDGRRS (142 aa). C179 and C214 are disulfide-bonded. Residues N181 and N197 are each glycosylated (N-linked (GlcNAc...) asparagine). A lipid anchor (GPI-anchor amidated serine) is attached at S231. Positions 232 to 254 are cleaved as a propeptide — removed in mature form; sequence SAVLFSSPPVILLISFLIFLIVG.

This sequence belongs to the prion family. Monomer and homodimer. Has a tendency to aggregate into amyloid fibrils containing a cross-beta spine, formed by a steric zipper of superposed beta-strands. Soluble oligomers may represent an intermediate stage on the path to fibril formation. Copper binding may promote oligomerization. Interacts with GRB2, APP, ERI3/PRNPIP and SYN1. Mislocalized cytosolically exposed PrP interacts with MGRN1; this interaction alters MGRN1 subcellular location and causes lysosomal enlargement. Interacts with KIAA1191.

The protein resides in the cell membrane. Its subcellular location is the golgi apparatus. Its function is as follows. Its primary physiological function is unclear. Has cytoprotective activity against internal or environmental stresses. May play a role in neuronal development and synaptic plasticity. May be required for neuronal myelin sheath maintenance. May play a role in iron uptake and iron homeostasis. Soluble oligomers are toxic to cultured neuroblastoma cells and induce apoptosis (in vitro). Association with GPC1 (via its heparan sulfate chains) targets PRNP to lipid rafts. Also provides Cu(2+) or Zn(2+) for the ascorbate-mediated GPC1 deaminase degradation of its heparan sulfate side chains. The sequence is that of Major prion protein (PRNP) from Cricetulus griseus (Chinese hamster).